A 631-amino-acid polypeptide reads, in one-letter code: DNA mismatch repair protein MutL (631 aa).

Belongs to the DNA mismatch repair MutL/HexB family.

In terms of biological role, this protein is involved in the repair of mismatches in DNA. It is required for dam-dependent methyl-directed DNA mismatch repair. May act as a 'molecular matchmaker', a protein that promotes the formation of a stable complex between two or more DNA-binding proteins in an ATP-dependent manner without itself being part of a final effector complex. The polypeptide is DNA mismatch repair protein MutL (Lactobacillus acidophilus (strain ATCC 700396 / NCK56 / N2 / NCFM)).